The chain runs to 424 residues: UDP-N-acetylglucosamine 1-carboxyvinyltransferase (424 aa).

22-23 contributes to the phosphoenolpyruvate binding site; it reads KN. Residue Arg96 coordinates UDP-N-acetyl-alpha-D-glucosamine. The active-site Proton donor is the Cys120. 2-(S-cysteinyl)pyruvic acid O-phosphothioketal is present on Cys120. Residues 125-129, Asp312, and Ile334 each bind UDP-N-acetyl-alpha-D-glucosamine; that span reads RPVDQ.

This sequence belongs to the EPSP synthase family. MurA subfamily.

It localises to the cytoplasm. It catalyses the reaction phosphoenolpyruvate + UDP-N-acetyl-alpha-D-glucosamine = UDP-N-acetyl-3-O-(1-carboxyvinyl)-alpha-D-glucosamine + phosphate. It participates in cell wall biogenesis; peptidoglycan biosynthesis. In terms of biological role, cell wall formation. Adds enolpyruvyl to UDP-N-acetylglucosamine. The sequence is that of UDP-N-acetylglucosamine 1-carboxyvinyltransferase from Polynucleobacter necessarius subsp. necessarius (strain STIR1).